Here is a 354-residue protein sequence, read N- to C-terminus: Protein-arginine kinase (354 aa).

The Phosphagen kinase C-terminal domain maps to 24–254 (IVLSSRIRLA…QQIIQQEKMA (231 aa)). ATP is bound by residues 27 to 31 (SSRIR), His-92, Arg-125, 176 to 180 (RASVM), and 207 to 212 (RGIYGE). The RDXXRA motif of the pArg binding pocket involved in allosteric regulation motif lies at 337 to 342 (RDYRRA).

This sequence belongs to the ATP:guanido phosphotransferase family.

It carries out the reaction L-arginyl-[protein] + ATP = N(omega)-phospho-L-arginyl-[protein] + ADP + H(+). Its activity is regulated as follows. Appears to be allosterically activated by the binding of pArg-containing polypeptides to the pArg-binding pocket localized in the C-terminal domain of McsB. Its function is as follows. Catalyzes the specific phosphorylation of arginine residues in a large number of proteins. Is part of the bacterial stress response system. Protein arginine phosphorylation has a physiologically important role and is involved in the regulation of many critical cellular processes, such as protein homeostasis, motility, competence, and stringent and stress responses, by regulating gene expression and protein activity. The polypeptide is Protein-arginine kinase (Bacillus cereus (strain G9842)).